The sequence spans 201 residues: Recombination protein RecR (201 aa).

The segment at 59 to 74 (CEICGNMDTENMCRIC) adopts a C4-type zinc-finger fold. Residues 82–177 (SIIAIVETVA…KISRLASGIP (96 aa)) enclose the Toprim domain.

The protein belongs to the RecR family.

May play a role in DNA repair. It seems to be involved in an RecBC-independent recombinational process of DNA repair. It may act with RecF and RecO. In Rickettsia africae (strain ESF-5), this protein is Recombination protein RecR.